The primary structure comprises 336 residues: Fructose-1,6-bisphosphatase class 1 (336 aa).

Mg(2+) contacts are provided by Glu-92, Asp-115, Leu-117, and Asp-118. Substrate-binding positions include 118 to 121 (DGSS), Asn-211, Tyr-244, 262 to 264 (YLY), and Lys-274. Glu-280 lines the Mg(2+) pocket.

The protein belongs to the FBPase class 1 family. Homotetramer. Mg(2+) serves as cofactor.

It localises to the cytoplasm. It catalyses the reaction beta-D-fructose 1,6-bisphosphate + H2O = beta-D-fructose 6-phosphate + phosphate. It participates in carbohydrate biosynthesis; gluconeogenesis. This is Fructose-1,6-bisphosphatase class 1 from Aliivibrio fischeri (strain MJ11) (Vibrio fischeri).